Consider the following 82-residue polypeptide: Delta-actitoxin-Aeq2c (82 aa).

The first 19 residues, 1-19 (MNRLMILVFAAVFLALASA), serve as a signal peptide directing secretion. A propeptide spanning residues 20–26 (DEDVDIA) is cleaved from the precursor. Cystine bridges form between cysteine 32-cysteine 79, cysteine 34-cysteine 69, and cysteine 62-cysteine 80.

Belongs to the sea anemone sodium channel inhibitory toxin family. Type I subfamily.

The protein resides in the secreted. The protein localises to the nematocyst. In terms of biological role, binds specifically to voltage-gated sodium channels (Nav), thereby delaying their inactivation during signal transduction. Causes death to crabs. This is Delta-actitoxin-Aeq2c from Actinia equina (Beadlet anemone).